The following is an 82-amino-acid chain: MKIIALLLMVFLDFIIVNXAEQNEKKRRDNLGIPGAGDTEDANQAYKIAQDLQYKNSDSSPGKRSIMLSKLKNNAKRQFSEN.

The first 21 residues, 1-21, serve as a signal peptide directing secretion; sequence MKIIALLLMVFLDFIIVNXAE.

It belongs to the scoloptoxin-21 family. As to expression, expressed by the venom gland.

The protein resides in the secreted. The sequence is that of U-scoloptoxin(21)-Sm3a from Scolopendra morsitans (Tanzanian blue ringleg centipede).